Here is a 389-residue protein sequence, read N- to C-terminus: Flap endonuclease 1 (389 aa).

The tract at residues 1–105 (MGIKGLNKLL…GELAKRKERR (105 aa)) is N-domain. Residue D34 coordinates Mg(2+). The DNA site is built by R47 and R71. Mg(2+) is bound by residues D87, E170, E172, D191, and D193. The tract at residues 134–265 (DVTRFEKRTV…QTALKLMKEH (132 aa)) is I-domain. Residue E170 coordinates DNA. Residues G243 and D245 each coordinate DNA. Residue D245 coordinates Mg(2+). The interaction with PCNA stretch occupies residues 351–359 (PQARLDGFF). The interval 360 to 389 (KVMPKEGGEKRKADDKKTKGKKPATKKAKK) is disordered. Residues 362 to 376 (MPKEGGEKRKADDKK) are compositionally biased toward basic and acidic residues. Residues 377 to 389 (TKGKKPATKKAKK) show a composition bias toward basic residues.

This sequence belongs to the XPG/RAD2 endonuclease family. FEN1 subfamily. As to quaternary structure, interacts with PCNA. Three molecules of FEN1 bind to one PCNA trimer with each molecule binding to one PCNA monomer. PCNA stimulates the nuclease activity without altering cleavage specificity. The cofactor is Mg(2+). Post-translationally, phosphorylated. Phosphorylation upon DNA damage induces relocalization to the nuclear plasma.

Its subcellular location is the nucleus. The protein resides in the nucleolus. The protein localises to the nucleoplasm. It is found in the mitochondrion. In terms of biological role, structure-specific nuclease with 5'-flap endonuclease and 5'-3' exonuclease activities involved in DNA replication and repair. During DNA replication, cleaves the 5'-overhanging flap structure that is generated by displacement synthesis when DNA polymerase encounters the 5'-end of a downstream Okazaki fragment. It enters the flap from the 5'-end and then tracks to cleave the flap base, leaving a nick for ligation. Also involved in the long patch base excision repair (LP-BER) pathway, by cleaving within the apurinic/apyrimidinic (AP) site-terminated flap. Acts as a genome stabilization factor that prevents flaps from equilibrating into structures that lead to duplications and deletions. Also possesses 5'-3' exonuclease activity on nicked or gapped double-stranded DNA, and exhibits RNase H activity. Also involved in replication and repair of rDNA and in repairing mitochondrial DNA. In Yarrowia lipolytica (strain CLIB 122 / E 150) (Yeast), this protein is Flap endonuclease 1.